A 237-amino-acid chain; its full sequence is Probable transcriptional regulatory protein Exig_1693 (237 aa).

The protein belongs to the TACO1 family. YeeN subfamily.

It is found in the cytoplasm. In Exiguobacterium sibiricum (strain DSM 17290 / CCUG 55495 / CIP 109462 / JCM 13490 / 255-15), this protein is Probable transcriptional regulatory protein Exig_1693.